We begin with the raw amino-acid sequence, 204 residues long: Holliday junction branch migration complex subunit RuvA (204 aa).

Residues 1–64 (MIGRLRGIIL…EDAQLLYGFN (64 aa)) form a domain I region. The interval 65–142 (NKQERALFRE…KGLNGDLFNN (78 aa)) is domain II. The flexible linker stretch occupies residues 143–155 (TGDISLPTASPQT). The tract at residues 156 to 204 (SDADIEAEAASALVALGYKPQEASRLVSKIAKPGADCETLIRDALRAAL) is domain III.

It belongs to the RuvA family. In terms of assembly, homotetramer. Forms an RuvA(8)-RuvB(12)-Holliday junction (HJ) complex. HJ DNA is sandwiched between 2 RuvA tetramers; dsDNA enters through RuvA and exits via RuvB. An RuvB hexamer assembles on each DNA strand where it exits the tetramer. Each RuvB hexamer is contacted by two RuvA subunits (via domain III) on 2 adjacent RuvB subunits; this complex drives branch migration. In the full resolvosome a probable DNA-RuvA(4)-RuvB(12)-RuvC(2) complex forms which resolves the HJ.

It is found in the cytoplasm. Functionally, the RuvA-RuvB-RuvC complex processes Holliday junction (HJ) DNA during genetic recombination and DNA repair, while the RuvA-RuvB complex plays an important role in the rescue of blocked DNA replication forks via replication fork reversal (RFR). RuvA specifically binds to HJ cruciform DNA, conferring on it an open structure. The RuvB hexamer acts as an ATP-dependent pump, pulling dsDNA into and through the RuvAB complex. HJ branch migration allows RuvC to scan DNA until it finds its consensus sequence, where it cleaves and resolves the cruciform DNA. The sequence is that of Holliday junction branch migration complex subunit RuvA from Yersinia pseudotuberculosis serotype O:1b (strain IP 31758).